Reading from the N-terminus, the 255-residue chain is Flagellar L-ring protein (255 aa).

The N-terminal stretch at 1 to 25 is a signal peptide; the sequence is MRRHSTRKTVARVAVVALAVGVLAG. Residue C26 is the site of N-palmitoyl cysteine attachment. C26 carries the S-diacylglycerol cysteine lipid modification.

It belongs to the FlgH family. The basal body constitutes a major portion of the flagellar organelle and consists of four rings (L,P,S, and M) mounted on a central rod.

It is found in the cell outer membrane. Its subcellular location is the bacterial flagellum basal body. In terms of biological role, assembles around the rod to form the L-ring and probably protects the motor/basal body from shearing forces during rotation. The polypeptide is Flagellar L-ring protein (Rhodospirillum rubrum (strain ATCC 11170 / ATH 1.1.1 / DSM 467 / LMG 4362 / NCIMB 8255 / S1)).